The sequence spans 122 residues: MIQQETYLNVADNSGAKKLRVIRVIGGFHKKYGTVGDIVVCSVREAIPNSDVKKGDVVRAVIVRTKKEIRRNDGTYIRFDDNAAVLIDKFNAPRGTRIFGPVARELREKGFMKIVSLAPEVW.

The protein belongs to the universal ribosomal protein uL14 family. In terms of assembly, part of the 50S ribosomal subunit. Forms a cluster with proteins L3 and L19. In the 70S ribosome, L14 and L19 interact and together make contacts with the 16S rRNA in bridges B5 and B8.

In terms of biological role, binds to 23S rRNA. Forms part of two intersubunit bridges in the 70S ribosome. The sequence is that of Large ribosomal subunit protein uL14 from Thermotoga maritima (strain ATCC 43589 / DSM 3109 / JCM 10099 / NBRC 100826 / MSB8).